We begin with the raw amino-acid sequence, 1240 residues long: Structural polyprotein (1240 aa).

Positions 1-35 (MFPYPTLNYPPMAPINPMAYRDPNPPRQVAPFRPP) are necessary for nucleocapsid assembly and virus assembly. The tract at residues 1 to 102 (MFPYPTLNYP…RKPKPGKRQR (102 aa)) is disordered. Pro residues predominate over residues 23–34 (PNPPRQVAPFRP). The host transcription inhibition stretch occupies residues 36 to 69 (LAAQIEDLRRSIANLTLKQRAPNPPAGPPAKRKK). A Supraphysiological nuclear export signal motif is present at residues 43–50 (LRRSIANL). A glycan (N-linked (GlcNAc...) asparagine; by host) is linked at Asn49. Over residues 65 to 102 (AKRKKPAPKPKPAQAKKKRPPPPAKKQKRKPKPGKRQR) the composition is skewed to basic residues. The Nuclear localization signal motif lies at 66–70 (KRKKP). Residues 82–112 (KRPPPPAKKQKRKPKPGKRQRMCMKLESDKT) form a binding to the viral RNA region. A ribosome-binding region spans residues 97–111 (PGKRQRMCMKLESDK). At Ser109 the chain carries Phosphoserine. Residues 111–260 (KTFPIMLNGQ…KDTPEGSEPW (150 aa)) form the Peptidase S3 domain. Thr112 carries the post-translational modification Phosphothreonine. Active-site charge relay system residues include His137, Asp159, and Ser211. The tract at residues 261 to 272 (SLATVMCVLANI) is functions as an uncleaved signal peptide for the precursor of protein E3/E2. Topologically, residues 261–682 (SLATVMCVLA…HEVVVYYYNR (422 aa)) are extracellular. 2 N-linked (GlcNAc...) asparagine; by host glycosylation sites follow: Asn271 and Asn638. The helical transmembrane segment at 683 to 703 (YPLTTIIGLCTCVAIIMVSCV) threads the bilayer. The Cytoplasmic segment spans residues 704–743 (HPCGSFAGLRNLCITPYKLAPNAQVPILLALLCCIKPTRA). 4 S-palmitoyl cysteine; by host lipidation sites follow: Cys706, Cys716, Cys736, and Cys737. The interval 715 to 735 (LCITPYKLAPNAQVPILLALL) is transient transmembrane before p62-6K protein processing. The Extracellular portion of the chain corresponds to 744-758 (DDTLQVLNYLWNNNQ). A helical transmembrane segment spans residues 759–779 (NFFWMQTLIPLAALIVCMRIV). Position 780 (Arg780) is a topological domain, cytoplasmic. A helical membrane pass occupies residues 781-801 (CLFCCGPAFLLVCGAWAAAYE). Residues 802-1216 (HTAVMPNKVG…WSWLKVLVGG (415 aa)) lie on the Extracellular side of the membrane. N-linked (GlcNAc...) asparagine; by host glycosylation is present at Asn834. 4 disulfide bridges follow: Cys848–Cys913, Cys861–Cys893, Cys862–Cys895, and Cys867–Cys877. The tract at residues 883-900 (VYPFMWGGAYCFCDTENT) is E1 fusion peptide loop. Asn933 carries an N-linked (GlcNAc...) asparagine; by host glycan. 3 disulfide bridges follow: Cys1059/Cys1071, Cys1101/Cys1176, and Cys1106/Cys1180. A helical transmembrane segment spans residues 1217-1237 (TSAFIVLGLIATAVVALVLFF). At 1238–1240 (HRH) the chain is on the cytoplasmic side.

Part of a tetrameric complex composed of host CRM1, host importin alpha/beta dimer and the viral capsid; this complex blocks the receptor-mediated transport through the nuclear pore. Interacts with host phosphatase PPP1CA; this interaction dephosphorylates the capsid protein, which increases its ability to bind to the viral genome. Interacts with host karyopherin KPNA4; this interaction allows the nuclear import of the viral capsid protein. Interacts with spike glycoprotein E2. Interacts with host IRAK1; the interaction leads to inhibition of IRAK1-dependent signaling. As to quaternary structure, the precursor of protein E3/E2 and E1 form a heterodimer shortly after synthesis. In terms of assembly, the precursor of protein E3/E2 and E1 form a heterodimer shortly after synthesis. Processing of the precursor of protein E3/E2 into E2 and E3 results in a heterodimer of the spike glycoproteins E2 and E1. Spike at virion surface are constituted of three E2-E1 heterodimers. After target cell attachment and endocytosis, E1 change conformation to form homotrimers. Interacts with 6K protein. Processing of the precursor of protein E3/E2 into E2 and E3 results in a heterodimer of the spike glycoproteins E2 and E1. Spike at virion surface are constituted of three E2-E1 heterodimers. Interacts with 6K protein. As to quaternary structure, interacts with spike glycoprotein E1. Interacts with spike glycoprotein E2. Structural polyprotein: Specific enzymatic cleavages in vivo yield mature proteins. Capsid protein is auto-cleaved during polyprotein translation, unmasking a signal peptide at the N-terminus of the precursor of E3/E2. The remaining polyprotein is then targeted to the host endoplasmic reticulum, where host signal peptidase cleaves it into pE2, 6K and E1 proteins. pE2 is further processed to mature E3 and E2 by host furin in trans-Golgi vesicle. In terms of processing, phosphorylated on serine and threonine residues. Post-translationally, palmitoylated via thioester bonds. These palmitoylations may induce disruption of the C-terminus transmembrane. This would result in the reorientation of E2 C-terminus from lumenal to cytoplasmic side. N-glycosylated. In terms of processing, palmitoylated via thioester bonds.

The protein localises to the virion. Its subcellular location is the host cytoplasm. It localises to the host cell membrane. It is found in the host nucleus. The protein resides in the virion membrane. It carries out the reaction Autocatalytic release of the core protein from the N-terminus of the togavirus structural polyprotein by hydrolysis of a -Trp-|-Ser- bond.. In terms of biological role, forms an icosahedral capsid with a T=4 symmetry composed of 240 copies of the capsid protein surrounded by a lipid membrane through which penetrate 80 spikes composed of trimers of E1-E2 heterodimers. The capsid protein binds to the viral RNA genome at a site adjacent to a ribosome binding site for viral genome translation following genome release. Possesses a protease activity that results in its autocatalytic cleavage from the nascent structural protein. Following its self-cleavage, the capsid protein transiently associates with ribosomes, and within several minutes the protein binds to viral RNA and rapidly assembles into icosahedric core particles. The resulting nucleocapsid eventually associates with the cytoplasmic domain of the spike glycoprotein E2 at the cell membrane, leading to budding and formation of mature virions. In case of infection, new virions attach to target cells and after clathrin-mediated endocytosis their membrane fuses with the host endosomal membrane. This leads to the release of the nucleocapsid into the cytoplasm, followed by an uncoating event necessary for the genomic RNA to become accessible. The uncoating might be triggered by the interaction of capsid proteins with ribosomes. Binding of ribosomes would release the genomic RNA since the same region is genomic RNA-binding and ribosome-binding. Specifically inhibits interleukin-1 receptor-associated kinase 1/IRAK1-dependent signaling during viral entry, representing a means by which the alphaviruses may evade innate immune detection and activation prior to viral gene expression. Inhibits host transcription. Forms a tetrameric complex with XPO1/CRM1 and the nuclear import receptor importin. This complex blocks the central channel of host nuclear pores thereby inhibiting the receptor-mediated nuclear transport and thus the host mRNA and rRNA transcription. The inhibition of transcription is linked to a cytopathic effect on the host cell. Functionally, provides the signal sequence for the translocation of the precursor of protein E3/E2 to the host endoplasmic reticulum. Furin-cleaved E3 remains associated with spike glycoprotein E1 and mediates pH protection of the latter during the transport via the secretory pathway. After virion release from the host cell, the assembly protein E3 is gradually released in the extracellular space. Its function is as follows. Plays a role in viral attachment to target host cell, by binding to the cell receptor. Synthesized as a p62 precursor which is processed by furin at the cell membrane just before virion budding, giving rise to E2-E1 heterodimer. The p62-E1 heterodimer is stable, whereas E2-E1 is unstable and dissociate at low pH. p62 is processed at the last step, presumably to avoid E1 fusion activation before its final export to cell surface. E2 C-terminus contains a transitory transmembrane that would be disrupted by palmitoylation, resulting in reorientation of the C-terminal tail from lumenal to cytoplasmic side. This step is critical since E2 C-terminus is involved in budding by interacting with capsid proteins. This release of E2 C-terminus in cytoplasm occurs lately in protein export, and precludes premature assembly of particles at the endoplasmic reticulum membrane. Constitutive membrane protein involved in virus glycoprotein processing, cell permeabilization, and the budding of viral particles. Disrupts the calcium homeostasis of the cell, probably at the endoplasmic reticulum level. This leads to cytoplasmic calcium elevation. Because of its lipophilic properties, the 6K protein is postulated to influence the selection of lipids that interact with the transmembrane domains of the glycoproteins, which, in turn, affects the deformability of the bilayer required for the extreme curvature that occurs as budding proceeds. Present in low amount in virions, about 3% compared to viral glycoproteins. In terms of biological role, class II viral fusion protein. Fusion activity is inactive as long as E1 is bound to E2 in mature virion. After virus attachment to target cell and endocytosis, acidification of the endosome would induce dissociation of E1/E2 heterodimer and concomitant trimerization of the E1 subunits. This E1 trimer is fusion active, and promotes release of viral nucleocapsid in cytoplasm after endosome and viral membrane fusion. Efficient fusion requires the presence of cholesterol and sphingolipid in the target membrane. Fusion is optimal at levels of about 1 molecule of cholesterol per 2 molecules of phospholipids, and is specific for sterols containing a 3-beta-hydroxyl group. The sequence is that of Structural polyprotein from Eastern equine encephalitis virus (strain va33[ten broeck]) (EEEV).